The primary structure comprises 177 residues: Ferritin, heavy subunit (177 aa).

The Ferritin-like diiron domain occupies 7 to 156 (QNFHQDCEAA…DWVTNLRRMG (150 aa)). Fe cation is bound by residues glutamate 24, glutamate 59, histidine 62, glutamate 104, and glutamine 138.

Belongs to the ferritin family. Oligomer of 24 subunits. There are at least two types of subunits. The functional molecule forms a roughly spherical shell with a diameter of 12 nm and contains a central cavity into which the insoluble mineral iron core is deposited. Liver, gonads, head kidney, heart and spleen.

It catalyses the reaction 4 Fe(2+) + O2 + 4 H(+) = 4 Fe(3+) + 2 H2O. Functionally, stores iron in a soluble, non-toxic, readily available form. Important for iron homeostasis. Has ferroxidase activity. Iron is taken up in the ferrous form and deposited as ferric hydroxides after oxidation. This is Ferritin, heavy subunit from Salmo salar (Atlantic salmon).